Here is a 318-residue protein sequence, read N- to C-terminus: L-lactate dehydrogenase (318 aa).

4 residues coordinate NAD(+): Val14, Asp35, Lys40, and Tyr66. Substrate contacts are provided by residues Arg89 and 121-124; that span reads NPVD. An NAD(+)-binding site is contributed by Ser144. 149 to 152 serves as a coordination point for substrate; that stretch reads DTAR. His176 serves as the catalytic Proton acceptor. Tyr220 bears the Phosphotyrosine mark. Position 229 (Thr229) interacts with substrate.

The protein belongs to the LDH/MDH superfamily. LDH family. In terms of assembly, homotetramer.

Its subcellular location is the cytoplasm. The enzyme catalyses (S)-lactate + NAD(+) = pyruvate + NADH + H(+). The protein operates within fermentation; pyruvate fermentation to lactate; (S)-lactate from pyruvate: step 1/1. Functionally, catalyzes the conversion of lactate to pyruvate. This Staphylococcus haemolyticus (strain JCSC1435) protein is L-lactate dehydrogenase.